The following is a 1644-amino-acid chain: Kinesin-like protein unc-104 (1644 aa).

The region spanning 3 to 351 (SVKVAVRVRP…LRYADRAKQI (349 aa)) is the Kinesin motor domain. 97–104 (GQTGAGKS) contributes to the ATP binding site. Residues 358-436 (NEDANAKLIR…IAELNETWEE (79 aa)) adopt a coiled-coil conformation. Residues 499 to 565 (TRLGTSEANV…LQTGSRVILG (67 aa)) form the FHA domain. Basic and acidic residues predominate over residues 574 to 591 (HPEQAREKREKPKDKDVG). Positions 574–598 (HPEQAREKREKPKDKDVGENPGGNA) are disordered. Residues 631 to 672 (EQFKREKLAADQEFEEQRKTYEARIDALQKQVEEQSMTMSMY) are a coiled coil. Disordered stretches follow at residues 953–985 (EQEDADSGRGDSSVASELHESNEHEPGEHLQPG) and 1419–1440 (HMVIPPSPQTPVKDQQTPTLPE). Residues 969–984 (ELHESNEHEPGEHLQP) are compositionally biased toward basic and acidic residues. Residues 1428–1437 (TPVKDQQTPT) are compositionally biased toward polar residues. Residues 1542–1640 (VVARKGYLNV…WLYAINPLLA (99 aa)) form the PH domain.

This sequence belongs to the TRAFAC class myosin-kinesin ATPase superfamily. Kinesin family. Unc-104 subfamily. As to quaternary structure, monomer.

It localises to the cytoplasm. The protein resides in the cytoskeleton. In terms of biological role, required for presynaptic maturation, has a role in axonal transport of dense-core vesicles carrying synaptic vesicle precursors, components required for the morphological transformation of axonal growth cones to mature boutons. This is Kinesin-like protein unc-104 from Aedes aegypti (Yellowfever mosquito).